Reading from the N-terminus, the 348-residue chain is Neuronal growth regulator 1 (348 aa).

Residues methionine 1–serine 31 form the signal peptide. 3 consecutive Ig-like C2-type domains span residues valine 32–threonine 128, proline 133–valine 215, and proline 219–asparagine 307. Cysteine 54 and cysteine 112 are joined by a disulfide. N-linked (GlcNAc...) asparagine glycans are attached at residues asparagine 67 and asparagine 149. 2 disulfide bridges follow: cysteine 154–cysteine 197 and cysteine 239–cysteine 291. Tyrosine 181 carries the phosphotyrosine modification. N-linked (GlcNAc...) asparagine glycosylation is found at asparagine 269, asparagine 280, asparagine 288, and asparagine 301. The GPI-anchor amidated glycine moiety is linked to residue glycine 318. Positions serine 319–glutamine 348 are cleaved as a propeptide — removed in mature form.

Belongs to the immunoglobulin superfamily. IgLON family. In terms of processing, glycosylated. In terms of tissue distribution, highly expressed in brain.

The protein localises to the cell membrane. May be involved in cell-adhesion. May function as a trans-neural growth-promoting factor in regenerative axon sprouting in the mammalian brain. The polypeptide is Neuronal growth regulator 1 (Negr1) (Rattus norvegicus (Rat)).